Here is a 159-residue protein sequence, read N- to C-terminus: Protein US8.5 (159 aa).

The interval 27–107 is disordered; sequence SSQPLDPEGP…APSPHPRPPG (81 aa). Basic and acidic residues predominate over residues 80–91; that stretch reads SDERGPPRHDRP.

It belongs to the HHV-1 US8.5 protein family. In terms of processing, phosphorylated.

Its subcellular location is the host nucleus. The protein localises to the host nucleolus. This is Protein US8.5 from Human herpesvirus 1 (strain 17) (HHV-1).